A 624-amino-acid chain; its full sequence is Methyl-accepting chemotaxis protein McpG (624 aa).

Residues 11-31 (ILLAASLIVILAFSLFTLYND) form a helical membrane-spanning segment. Residues 36–254 (NAIREDLENY…GLPSANWYIG (219 aa)) enclose the Cache domain. The helical transmembrane segment at 272 to 292 (SAVIATVVAVVIIIGLLGLLI) threads the bilayer. The HAMP domain maps to 293 to 347 (RVLMQPLHTMTRAMEDIAEGEGDLTKRLHIHSHDEFGVLGNAFNRFVERIHSSIR). Residues 352–588 (ATEQVNEVAL…AINMDINEIN (237 aa)) enclose the Methyl-accepting transducer domain.

Belongs to the methyl-accepting chemotaxis (MCP) protein family.

It is found in the cell membrane. Functionally, chemotactic-signal transducers respond to changes in the concentration of attractants and repellents in the environment, transduce a signal from the outside to the inside of the cell, and facilitate sensory adaptation through the variation of the level of methylation. McpG is a specific gamma-aminobutyric acid (GABA) chemoreceptor that recognizes GABA over a wide range of environmental conditions. Contributes to attraction to and colonization of plant roots. This chain is Methyl-accepting chemotaxis protein McpG, found in Pseudomonas putida (strain ATCC 47054 / DSM 6125 / CFBP 8728 / NCIMB 11950 / KT2440).